We begin with the raw amino-acid sequence, 720 residues long: Receptor-like protein CLAVATA2 (720 aa).

The N-terminal stretch at 1–25 (MIKIADFTLFFFIFVFSPSLPLAQS) is a signal peptide. The tract at residues 26-92 (QLPDLDPQDK…LNLSSQIHPS (67 aa)) is N-cap. The Extracellular segment spans residues 26 to 686 (QLPDLDPQDK…QNELVEGPIS (661 aa)). N-linked (GlcNAc...) asparagine glycosylation is found at asparagine 49, asparagine 62, asparagine 84, asparagine 108, asparagine 127, and asparagine 168. Cysteine 60 and cysteine 68 are joined by a disulfide. 21 LRR repeats span residues 96–122 (LSSLQSLDLSHNNFSGNIPSCFGSLRN), 124–144 (RTLNLSRNRFVGSIPATFVSL), 146–168 (ELREVVLSENRDLGGVVPHWFGN), 170–194 (SMNLERVDFSFCSFVGELPESLLYL), 195–217 (KSLKYLNLESNNMTGTLRDFQQP), 219–238 (VVLNLASNQFSGTLPCFYAS), 239–263 (RPSLSILNIAENSLVGGLPSCLGSL), 264–287 (KELSHLNLSFNGFNYEISPRLMFS), 288–311 (EKLVMLDLSHNGFSGRLPSRISET), 314–338 (KLGLVLLDLSHNSFSGDIPLRITEL), 339–362 (KSLQALRLSHNLLTGDIPARIGNL), 364–386 (YLQVIDLSHNALTGSIPLNIVGC), 388–410 (QLLALMISNNNLSGEIQPELDAL), 411–436 (DSLKILDISNNHISGEIPLTLAGLKS), 438–458 (EIVDISSNNLSGNLNEAITKW), 459–482 (SNLKYLSLARNKFSGTLPSWLFKF), 484–506 (KIQMIDYSSNRFSWFIPDDNLNS), 547–571 (LLSMVGIDLSDNLLHGEIPEALFRQ), 573–594 (NIEYLNLSYNFLEGQLPRLEKL), 595–617 (PRLKALDLSHNSLSGQVIGNISA), and 619–641 (PGLTLLNLSHNCFSGIITEKEGL). The N-linked (GlcNAc...) asparagine glycan is linked to asparagine 206. The N-linked (GlcNAc...) asparagine glycan is linked to asparagine 270. A glycan (N-linked (GlcNAc...) asparagine) is linked at asparagine 361. Asparagine 398 carries N-linked (GlcNAc...) asparagine glycosylation. N-linked (GlcNAc...) asparagine glycosylation is present at asparagine 446. N-linked (GlcNAc...) asparagine glycosylation is present at asparagine 505. 3 N-linked (GlcNAc...) asparagine glycosylation sites follow: asparagine 578, asparagine 614, and asparagine 625. Residues 649-682 (AGNPELCVETPGSKCDPANIDASQEEIYQNELVE) form a C-cap/acidic domain region. The chain crosses the membrane as a helical span at residues 687 to 707 (IWIFCLSAFISFDFGVLGIFC). Residues 708-720 (SARARSYILQTKA) are Cytoplasmic-facing.

This sequence belongs to the RLP family. Parts of a tetrameric complex made of two CLV2/CRN heterodimers that can interact with CLV3 and CLE peptides. CLV2/CRN heterodimer interacts with CLV1 homodimers. Interacts with CRN; this dimer can interact with BAM3. Interacts with CLE14. As to expression, mostly expressed in apices (e.g. shoot apical meristem and flower buds), and, to a lower extent, in flowers, leaves, seedlings and siliques. Also expressed in the inner tissues of the proximal root meristem. Expressed throughout the vascular cylinder of root tips.

The protein localises to the cell membrane. The protein resides in the endoplasmic reticulum membrane. Its function is as follows. Involved in the perception of CLV3 and CLV3-like (CLE) peptides, that act as extracellular signals regulating meristems maintenance. Required for the sensing of the root CLE peptides (e.g. CLE8, CLE9/CLE10, CLE11, CLE13, CLE14, CLE16, CLE17, CLE18, CLE20, CLE21, CLE25, CLE26, CLE40, CLE41/CLE44 and CLE45), which also involves CRN and leads to root growth regulation, mostly in the phloem and protophloem. Involved in controlling the stem cell population size in shoot and root apical meristems, and during organ development. Promotes the formation of CLV1 multimers. In complex with CRN, perceives secreted CLV3-like effector proteins from plant-parasitic cyst nematodes as ligand mimics of the plant CLE signaling pathway. This recognition is required for proper feeding structure (syncytium) development and ultimately successful nematode infection. CLE14 perception by CLV2/CRN complex triggers root meristem differentiation. The chain is Receptor-like protein CLAVATA2 from Arabidopsis thaliana (Mouse-ear cress).